A 115-amino-acid chain; its full sequence is NADH-ubiquinone oxidoreductase chain 3 (115 aa).

A run of 3 helical transmembrane segments spans residues 3–23, 55–75, and 86–106; these read LPLA…IAFW, FFLV…LLPL, and LMLT…AYEW.

The protein belongs to the complex I subunit 3 family. Core subunit of respiratory chain NADH dehydrogenase (Complex I) which is composed of 45 different subunits. Interacts with TMEM186. Interacts with TMEM242.

It is found in the mitochondrion inner membrane. The catalysed reaction is a ubiquinone + NADH + 5 H(+)(in) = a ubiquinol + NAD(+) + 4 H(+)(out). Core subunit of the mitochondrial membrane respiratory chain NADH dehydrogenase (Complex I) which catalyzes electron transfer from NADH through the respiratory chain, using ubiquinone as an electron acceptor. Essential for the catalytic activity of complex I. The chain is NADH-ubiquinone oxidoreductase chain 3 from Lemur catta (Ring-tailed lemur).